A 157-amino-acid polypeptide reads, in one-letter code: Vitamin K-dependent protein C (157 aa).

The region spanning 1–157 (EKWELDLDIK…GCGRLHNYGV (157 aa)) is the Peptidase S1 domain. Asn-17 is a glycosylation site (N-linked (GlcNAc...) asparagine). Catalysis depends on Asp-26, which acts as the Charge relay system. Asn-78 carries N-linked (GlcNAc...) asparagine glycosylation. 2 disulfides stabilise this stretch: Cys-96–Cys-110 and Cys-121–Cys-149. Ser-125 (charge relay system) is an active-site residue.

The protein belongs to the peptidase S1 family. Plasma; synthesized in the liver.

It localises to the secreted. Its subcellular location is the golgi apparatus. The protein localises to the endoplasmic reticulum. The enzyme catalyses Degradation of blood coagulation factors Va and VIIIa.. Functionally, protein C is a vitamin K-dependent serine protease that regulates blood coagulation by inactivating factors Va and VIIIa in the presence of calcium ions and phospholipids. Exerts a protective effect on the endothelial cell barrier function. The polypeptide is Vitamin K-dependent protein C (PROC) (Felis catus (Cat)).